We begin with the raw amino-acid sequence, 610 residues long: Elongation factor 4 (610 aa).

The region spanning 11 to 193 is the tr-type G domain; that stretch reads QRIRNFSIVA…KIVQDIPAPT (183 aa). GTP-binding positions include 23-28 and 140-143; these read DHGKST and NKVD.

This sequence belongs to the TRAFAC class translation factor GTPase superfamily. Classic translation factor GTPase family. LepA subfamily.

Its subcellular location is the cell membrane. The enzyme catalyses GTP + H2O = GDP + phosphate + H(+). Required for accurate and efficient protein synthesis under certain stress conditions. May act as a fidelity factor of the translation reaction, by catalyzing a one-codon backward translocation of tRNAs on improperly translocated ribosomes. Back-translocation proceeds from a post-translocation (POST) complex to a pre-translocation (PRE) complex, thus giving elongation factor G a second chance to translocate the tRNAs correctly. Binds to ribosomes in a GTP-dependent manner. The protein is Elongation factor 4 of Limosilactobacillus fermentum (strain NBRC 3956 / LMG 18251) (Lactobacillus fermentum).